A 153-amino-acid polypeptide reads, in one-letter code: Ribosomal RNA large subunit methyltransferase H (153 aa).

S-adenosyl-L-methionine is bound by residues Leu-71, Gly-102, and 121–126 (LSRMTL).

It belongs to the RNA methyltransferase RlmH family. As to quaternary structure, homodimer.

Its subcellular location is the cytoplasm. It catalyses the reaction pseudouridine(1915) in 23S rRNA + S-adenosyl-L-methionine = N(3)-methylpseudouridine(1915) in 23S rRNA + S-adenosyl-L-homocysteine + H(+). Functionally, specifically methylates the pseudouridine at position 1915 (m3Psi1915) in 23S rRNA. This Anaeromyxobacter sp. (strain Fw109-5) protein is Ribosomal RNA large subunit methyltransferase H.